Reading from the N-terminus, the 267-residue chain is Chorismate mutase (267 aa).

Residues 7–262 (LSDASKALDL…EVEYLMQRLK (256 aa)) enclose the Chorismate mutase domain. L-tyrosine is bound by residues Arg-77, Arg-78, Asn-145, Gly-147, Ser-148, and Thr-151. Residues Asn-145, Gly-147, and Ser-148 each contribute to the L-tryptophan site.

Homodimer.

The protein localises to the cytoplasm. The enzyme catalyses chorismate = prephenate. Its pathway is metabolic intermediate biosynthesis; prephenate biosynthesis; prephenate from chorismate: step 1/1. Each dimer has two allosteric binding sites that can bind the regulatory effectors tryptophan or tyrosine. Can bind either one tryptophan or one tyrosine, two tryptophan or two tyrosine or one tryptophan and one tyrosine, which differentially affect the catalytic activity. Activated by tryptophan and subject to feedback inhibition by tyrosine. In the presence of both tryptophan and tyrosine, the enzyme is in the activated state. Its function is as follows. Catalyzes the Claisen rearrangement of chorismate to prephenate. Acts at the first branch point in the aromatic amino acid pathway where it steers biosynthesis towards phenylalanine and tyrosine, and away from tryptophan. This chain is Chorismate mutase, found in Emericella nidulans (strain FGSC A4 / ATCC 38163 / CBS 112.46 / NRRL 194 / M139) (Aspergillus nidulans).